The primary structure comprises 1026 residues: Exportin-T (1026 aa).

It belongs to the exportin family.

Its subcellular location is the nucleus. The protein localises to the cytoplasm. In terms of biological role, tRNA nucleus export receptor which facilitates tRNA translocation across the nuclear pore complex. Involved in pre-tRNA splicing, probably by affecting the interaction of pre-tRNA with splicing endonuclease. In Neurospora crassa (strain ATCC 24698 / 74-OR23-1A / CBS 708.71 / DSM 1257 / FGSC 987), this protein is Exportin-T (los1).